We begin with the raw amino-acid sequence, 156 residues long: V-type proton ATPase 16 kDa proteolipid subunit c (156 aa).

The Lumenal portion of the chain corresponds to 1–7 (MAENPIY). Residues 8–30 (GPFFGVMGAASAIIFSALGAAYG) form a helical membrane-spanning segment. Residues 31-52 (TAKSGTGIAAMSVMRPELIMKS) are Cytoplasmic-facing. A helical transmembrane segment spans residues 53 to 73 (IIPVVMAGIIAIYGLVVAVLI). The Lumenal portion of the chain corresponds to 74–92 (AGSLDSPSNNYTLYRGFIH). Residues 93–114 (LGAGLAVGFSGLAAGFAIGIVG) form a helical membrane-spanning segment. Residues 115–126 (DAGVRGTAQQPR) lie on the Cytoplasmic side of the membrane. Residues 127–152 (LFVGMILILIFAEVLGLYGLIVAIYL) traverse the membrane as a helical segment. Residues 153-156 (YTKQ) are Lumenal-facing.

Belongs to the V-ATPase proteolipid subunit family. V-ATPase is a heteromultimeric enzyme made up of two complexes: the ATP-hydrolytic V1 complex and the proton translocation V0 complex. The V1 complex consists of three catalytic AB heterodimers that form a heterohexamer, three peripheral stalks each consisting of EG heterodimers, one central rotor including subunits D and F, and the regulatory subunits C and H. The proton translocation complex V0 consists of the proton transport subunit a, a ring of proteolipid subunits c9c'', rotary subunit d, subunits e and f, and the accessory subunits VhaAC45 and ATP6AP2.

The protein localises to the membrane. In terms of biological role, proton-conducting pore forming subunit of the V0 complex of vacuolar(H+)-ATPase (V-ATPase), a multisubunit enzyme composed of a peripheral complex (V1) that hydrolyzes ATP and a membrane integral complex (V0) that translocates protons. V-ATPase is responsible for acidifying and maintaining the pH of intracellular compartments and in some cell types, is targeted to the plasma membrane, where it is responsible for acidifying the extracellular environment. This is V-type proton ATPase 16 kDa proteolipid subunit c (VHA16) from Manduca sexta (Tobacco hawkmoth).